The chain runs to 788 residues: Protein translocase subunit SecA 2 (788 aa).

Residues glutamine 77, 95–99 (GEGKT), and aspartate 491 each bind ATP.

This sequence belongs to the SecA family. Monomer and homodimer. Part of the essential Sec protein translocation apparatus which comprises SecA, SecYEG and auxiliary proteins SecDF. Other proteins may also be involved.

Its subcellular location is the cell membrane. The protein localises to the cytoplasm. It catalyses the reaction ATP + H2O + cellular proteinSide 1 = ADP + phosphate + cellular proteinSide 2.. In terms of biological role, part of the Sec protein translocase complex. Interacts with the SecYEG preprotein conducting channel. Has a central role in coupling the hydrolysis of ATP to the transfer of proteins into and across the cell membrane, serving as an ATP-driven molecular motor driving the stepwise translocation of polypeptide chains across the membrane. The protein is Protein translocase subunit SecA 2 of Lactobacillus johnsonii (strain CNCM I-12250 / La1 / NCC 533).